A 475-amino-acid chain; its full sequence is Ribosomal protein uS12 methylthiotransferase RimO (475 aa).

The 110-residue stretch at 5–114 folds into the MTTase N-terminal domain; the sequence is RTVRLIRLGC…IAQRLEDVLA (110 aa). [4Fe-4S] cluster contacts are provided by Cys14, Cys49, Cys78, Cys174, Cys178, and Cys181. Residues 160 to 390 form the Radical SAM core domain; the sequence is LDDSPVAPLK…AGIAEEVTAD (231 aa). The 69-residue stretch at 393–461 folds into the TRAM domain; it reads RARLGETVDV…GVDFLAAPVT (69 aa).

It belongs to the methylthiotransferase family. RimO subfamily. The cofactor is [4Fe-4S] cluster.

It is found in the cytoplasm. It catalyses the reaction L-aspartate(89)-[ribosomal protein uS12]-hydrogen + (sulfur carrier)-SH + AH2 + 2 S-adenosyl-L-methionine = 3-methylsulfanyl-L-aspartate(89)-[ribosomal protein uS12]-hydrogen + (sulfur carrier)-H + 5'-deoxyadenosine + L-methionine + A + S-adenosyl-L-homocysteine + 2 H(+). In terms of biological role, catalyzes the methylthiolation of an aspartic acid residue of ribosomal protein uS12. In Acidothermus cellulolyticus (strain ATCC 43068 / DSM 8971 / 11B), this protein is Ribosomal protein uS12 methylthiotransferase RimO.